Reading from the N-terminus, the 173-residue chain is Monothiol glutaredoxin-S14, chloroplastic (173 aa).

The N-terminal 63 residues, 1 to 63, are a transit peptide targeting the chloroplast; the sequence is MALRSVKTPT…KLKPTKFRCS (63 aa). The Glutaredoxin domain maps to 72–173; the sequence is KDTLEKLVNS…QEEVEKAMCS (102 aa). K89 contributes to the glutathione binding site. Positions 97 and 99 each coordinate [2Fe-2S] cluster. C97 is modified (S-glutathionyl cysteine). A required for CAX1 activation region spans residues 97–100; that stretch reads CGFS. Positions 126 and 130 each coordinate glutathione. The interval 133–137 is required for CAX1 activation; the sequence is SNWPT. Glutathione-binding positions include F138 and 151–152; that span reads CD.

The protein belongs to the glutaredoxin family. CGFS subfamily. As to quaternary structure, [2Fe-2S]-bridged holo-homodimer. Interacts with N-terminal part of CAX1 in yeast. Interacts in vitro with SUFE1, BOLA1, BOLA2 and BOLA4. Interacts in vivo only with SUFE1, BOLA1 and BOLA4. Interacts with SBP1. In terms of tissue distribution, highly expressed in leaves, at intermediate levels in stems and at lower levels in roots and flowers.

The protein localises to the plastid. It localises to the chloroplast. May only reduce GSH-thiol disulfides, but not protein disulfides (Potential). Probably involved in the regulation of the redox state of the BOLA proteins (Potential). May act as Fe-S cluster donors to Fe-S cluster-requiring proteins. May protect cells against protein oxidative damage. May regulate CAX cation transporters. The GRXS14-BOLA1 heterodimer binds a labile, oxygen sensitive Fe-S cluster. This Arabidopsis thaliana (Mouse-ear cress) protein is Monothiol glutaredoxin-S14, chloroplastic.